We begin with the raw amino-acid sequence, 139 residues long: uncharacterized protein (139 aa).

The Globin domain occupies 1 to 133; the sequence is MLSEETIRVI…LAKTLITLEK (133 aa).

The protein belongs to the globin family.

This is an uncharacterized protein from Aquifex aeolicus (strain VF5).